Here is a 264-residue protein sequence, read N- to C-terminus: MSSSDNYRLDGKVALVTGAGRGIGAAIAVALGQRGAKVVVNYANSREAAEKVVDEIKSNGSDAISIQADVGDPDAVTKLMDQAVEHFGYLDIVSSNAGIVSFGHVKDVTPDEFDRVFRVNTRGQFFVAREAYRHLREGGRIILTSSNTASVKGVPRHAVYSGSKGAIDTFVRCLAIDCGDKKITVNAVAPGAIKTDMFLSVSREYIPNGETFTDEQVDECAAWLSPLNRVGLPVDVARVVSFLASDAAEWISGKIIGVDGGAFR.

NADP(+)-binding residues include Ile23, Asp69, Asn96, and Arg129. Active-site proton donor residues include Ser145 and Ser146. NADP(+)-binding residues include Tyr160, Lys164, Ile193, and Thr195. Tyr160 acts as the Proton acceptor in catalysis. Catalysis depends on Lys164, which acts as the Lowers pKa of active site Tyr.

Belongs to the short-chain dehydrogenases/reductases (SDR) family.

The enzyme catalyses (4S,8R)-2,13,16,20-tetrahydroxy-7,9-dioxapentacyclo[10.8.0.0(3,10).0(4,8).0(14,19)]icosa-1(12),2,5,10,13,16,19-heptaen-18-one + NADPH + H(+) = (4S,8R,16R)-2,13,16,20-tetrahydroxy-7,9-dioxapentacyclo[10.8.0.0(3,10).0(4,8).0(14,19)]icosa-1(12),2,5,10,13,19-hexaen-18-one + NADP(+). It functions in the pathway mycotoxin biosynthesis; sterigmatocystin biosynthesis. Its function is as follows. Versicolorin reductase; part of the gene cluster that mediates the biosynthesis of sterigmatocystin (ST), a polyketide-derived furanocoumarin which is part of the most toxic and carcinogenic compounds among the known mycotoxins. The first step in the biosynthesis of sterigmatocystin is the production of hexanoate by the fatty acid synthase (FAS) units stcJ and stcK. The polyketide backbone is assembled by the non-reducing polyketide synthase stcA by condensation of the starter hexanoyl-CoA and 7 malonyl-CoA extender units followed by cyclization and release of norsolorinic acid. Norsolorinic acid is the first stable intermediate in the biosynthesis of sterigmatocystin and is converted into averantin (AVN) by the ketoreductase stcE which reduces the hexanoate ketone to an alcohol. Averantin is then oxidized into 5'-hydroxyaverantin (HAVN) by the cytochrome P450 monooxygenase stcF. 5'-hydroxyaverantin is further converted to 5'-oxyaverantin (OAVN) by the 5'-hydroxyaverantin dehydrogenase stcG. The next step is the conversion of OAVN into averufin (AVF) which is catalyzed by a yet to be identified enzyme. The cytochrome P450 monooxygenase stcB and the flavin-binding monooxygenase stcW are both required for the conversion of averufin to 1-hydroxyversicolorone. The esterase stcI probably catalyzes the formation of versiconal hemiacetal acetate from 1-hydroxyversicolorone. The oxydoreductase stcN then probably catalyzes the biosynthetic step from versiconal to versicolorin B (VERB). The next step is performed by the versicolorin B desaturase stcL to produce versicolorin A (VERA). The ketoreductase stcU and the cytochrome P450 monooxygenase stcS are involved in the conversion of versicolorin A to demethylsterigmatocystin. The Baeyer-Villiger oxidas stcQ and the reductase stcR might be involved in the biosynthetic step from versicolorin A to demethylsterigmatocystin. The final step in the biosynthesis of sterigmatocystin is the methylation of demethylsterigmatocystin catalyzed by the methyltransferase stcP. This Emericella nidulans (strain FGSC A4 / ATCC 38163 / CBS 112.46 / NRRL 194 / M139) (Aspergillus nidulans) protein is Versicolorin reductase stcU.